The chain runs to 478 residues: tRNA(Ile)-lysidine synthase (478 aa).

ATP is bound at residue 27 to 32 (SGGSDS).

The protein belongs to the tRNA(Ile)-lysidine synthase family.

It localises to the cytoplasm. It catalyses the reaction cytidine(34) in tRNA(Ile2) + L-lysine + ATP = lysidine(34) in tRNA(Ile2) + AMP + diphosphate + H(+). Its function is as follows. Ligates lysine onto the cytidine present at position 34 of the AUA codon-specific tRNA(Ile) that contains the anticodon CAU, in an ATP-dependent manner. Cytidine is converted to lysidine, thus changing the amino acid specificity of the tRNA from methionine to isoleucine. The protein is tRNA(Ile)-lysidine synthase of Rickettsia africae (strain ESF-5).